Here is a 199-residue protein sequence, read N- to C-terminus: dITP/XTP pyrophosphatase (199 aa).

Substrate is bound at residue 7–12 (TGNAGK). Residues Glu37 and Asp66 each coordinate Mg(2+). The active-site Proton acceptor is the Asp66. Residues Ser67, 146 to 149 (FGYD), Lys169, and 174 to 175 (HR) contribute to the substrate site.

This sequence belongs to the HAM1 NTPase family. Homodimer. Requires Mg(2+) as cofactor.

The catalysed reaction is XTP + H2O = XMP + diphosphate + H(+). It catalyses the reaction dITP + H2O = dIMP + diphosphate + H(+). It carries out the reaction ITP + H2O = IMP + diphosphate + H(+). In terms of biological role, pyrophosphatase that catalyzes the hydrolysis of nucleoside triphosphates to their monophosphate derivatives, with a high preference for the non-canonical purine nucleotides XTP (xanthosine triphosphate), dITP (deoxyinosine triphosphate) and ITP. Seems to function as a house-cleaning enzyme that removes non-canonical purine nucleotides from the nucleotide pool, thus preventing their incorporation into DNA/RNA and avoiding chromosomal lesions. The sequence is that of dITP/XTP pyrophosphatase from Deinococcus geothermalis (strain DSM 11300 / CIP 105573 / AG-3a).